We begin with the raw amino-acid sequence, 207 residues long: CASP-like protein 1D1 (207 aa).

Over 1–40 (MATVDGTTAPSSGGKTATVALESGGGRYGGPAPAKCSGAN) the chain is Cytoplasmic. A helical transmembrane segment spans residues 41–61 (LALRALLFAVSLSALVVLVTA). The Extracellular segment spans residues 62 to 89 (KQTVMVPFVIRPPQFILAPVPAKYTHSP). Residues 90-110 (ALIYLLAALCATCFYSLITAI) form a helical membrane-spanning segment. Over 111-124 (SSVRLLSSSACSAK) the chain is Cytoplasmic. Residues 125-145 (TLFYLILLDVFYAAVMASATG) form a helical membrane-spanning segment. Topologically, residues 146–176 (TAGAVAWVGLKGNSHTRWNKICNVYGKFCRH) are extracellular. The helical transmembrane segment at 177-197 (IGSSTFLALIAAIVLVLLAFL) threads the bilayer. The Cytoplasmic portion of the chain corresponds to 198 to 207 (NAYSLYRRSR).

This sequence belongs to the Casparian strip membrane proteins (CASP) family. In terms of assembly, homodimer and heterodimers.

The protein resides in the cell membrane. The sequence is that of CASP-like protein 1D1 from Oryza sativa subsp. japonica (Rice).